The primary structure comprises 296 residues: 3-methyl-2-oxobutanoate hydroxymethyltransferase (296 aa).

The segment covering 1 to 14 (MTAPTPTPANAATP) has biased composition (low complexity). The disordered stretch occupies residues 1–29 (MTAPTPTPANAATPYGTLPPASPLPQRRP). Mg(2+)-binding residues include Asp-71 and Asp-114. 3-methyl-2-oxobutanoate contacts are provided by residues 71 to 72 (DS), Asp-114, and Lys-143. Glu-145 is a binding site for Mg(2+). The Proton acceptor role is filled by Glu-212.

It belongs to the PanB family. In terms of assembly, homodecamer; pentamer of dimers. Mg(2+) is required as a cofactor.

It is found in the cytoplasm. It catalyses the reaction 3-methyl-2-oxobutanoate + (6R)-5,10-methylene-5,6,7,8-tetrahydrofolate + H2O = 2-dehydropantoate + (6S)-5,6,7,8-tetrahydrofolate. The protein operates within cofactor biosynthesis; (R)-pantothenate biosynthesis; (R)-pantoate from 3-methyl-2-oxobutanoate: step 1/2. Catalyzes the reversible reaction in which hydroxymethyl group from 5,10-methylenetetrahydrofolate is transferred onto alpha-ketoisovalerate to form ketopantoate. The chain is 3-methyl-2-oxobutanoate hydroxymethyltransferase from Paracidovorax citrulli (strain AAC00-1) (Acidovorax citrulli).